The following is a 194-amino-acid chain: WASH complex subunit 3 (194 aa).

M1 is modified (N-acetylmethionine). Residues 46–74 are a coiled coil; that stretch reads TVCEEKLADLSLRIQQIETTLNILDAKLS. A compositionally biased stretch (polar residues) spans 98–123; the sequence is THSEATSEQSQQNSLQDSGPQESEVT. 2 disordered regions span residues 98–125 and 158–194; these read THSE…VTPE and SEGL…SFSD.

This sequence belongs to the CCDC53 family. In terms of assembly, component of the WASH core complex also described as WASH regulatory complex (SHRC) composed of WASHC1, WASHC2, WASHC3, WASHC4 and WASHC5. The WASH core complex associates via WASHC2 with the F-actin-capping protein dimer (formed by CAPZA1, CAPZA2 or CAPZA3 and CAPZB) in a transient or substoichiometric manner which was initially described as WASH complex.

The protein localises to the early endosome. Its function is as follows. Acts as a component of the WASH core complex that functions as a nucleation-promoting factor (NPF) at the surface of endosomes, where it recruits and activates the Arp2/3 complex to induce actin polymerization, playing a key role in the fission of tubules that serve as transport intermediates during endosome sorting. This chain is WASH complex subunit 3, found in Bos taurus (Bovine).